A 729-amino-acid chain; its full sequence is Ubiquitin carboxyl-terminal hydrolase BAP1 (729 aa).

One can recognise a UCH catalytic domain in the interval 4-235 (GWLELESDPG…IRFNLMAVVP (232 aa)). The Arg-finger motif signature appears at 56–60 (RRSRR). Cys91 acts as the Nucleophile in catalysis. His169 functions as the Proton donor in the catalytic mechanism. Ser292 bears the Phosphoserine mark. The disordered stretch occupies residues 301-351 (APAASEGNHTDGAEEAAGSCAQAPSHSPPNKPKLVVKPPGSSLNGVHPNPT). The HBM-like motif motif lies at 363 to 366 (NHNY). 2 positions are modified to phosphoserine: Ser369 and Ser395. 2 disordered regions span residues 372–435 (QEEE…SADG) and 464–524 (SIKT…SPVT). A compositionally biased stretch (acidic residues) spans 395-409 (SDDEDDYEDDEEDDV). Residues 480-524 (THSQPSPTPSNESTDTASEIGSAFNSPLRSPIRSANPTRPSSPVT) are compositionally biased toward polar residues. Thr493 bears the Phosphothreonine mark. Ser521, Ser537, Ser585, and Ser597 each carry phosphoserine. The interval 575–623 (LTEGGKGSSPSIRPIQGSQGSSSPVEKEVVEATDSREKTGMVRPGEPLS) is disordered. Over residues 582–598 (SSPSIRPIQGSQGSSSP) the composition is skewed to polar residues. Residues 596-721 (SSPVEKEVVE…QRKPDRRKRS (126 aa)) are interaction with BRCA1. The span at 599–614 (VEKEVVEATDSREKTG) shows a compositional bias: basic and acidic residues. The stretch at 636–656 (LKCVEAEIANYEACLKEEVEK) forms a coiled coil. The segment at 642-686 (EIANYEACLKEEVEKRKKFKIDDQRRTHNYDEFICTFISMLAQEG) is interaction with YY1. The ULD domain occupies 670–698 (NYDEFICTFISMLAQEGMLANLVEQNISV). Residues 699-701 (RRR) form an interaction with nucleosomal DNA forming a DNA clamp with ASXL1 region. The Classical bipartite Nuclear localization signal (NLS) signature appears at 699–722 (RRRQGVSIGRLHKQRKPDRRKRSR). Positions 703–729 (GVSIGRLHKQRKPDRRKRSRPYKAKRQ) are disordered. Residues 713 to 729 (RKPDRRKRSRPYKAKRQ) are positively charged C-terminal extension (CTE). Residues 717–724 (RRKRSRPY) carry the Non-classical PY-nuclear localization signal (PY-NLS) motif.

The protein belongs to the peptidase C12 family. BAP1 subfamily. Core component of the polycomb repressive deubiquitinase (PR-DUB) complex, at least composed of BAP1, one of ASXL1, ASXL2 or (probably) ASXL3, and one of MBD5 or MBD6. The PR-DUB core associates with a number of accessory proteins, including FOXK1, FOXK2, KDM1B, HCFC1, YY1 and OGT; KDM1B specifically associates with ASXL2 PR-DUB complexes. The BAP1 deubiquitinase activity is not required for PR-DUB assembly. Homodimerizes (via coiled-coil hinge-region between the UCH and ULD domains) to mediate assembly of 2 copies of the BAP1-ASXL heterodimer into a bisymmetric tetramer; dimerization enhances association with nucleosomes. The PR-DUB complex associates with nucleosomes to mediate deubiquitination of 'lys-120' of histone H2AK118ub1 substrates; the association requires the positively charged C-terminal tail of BAP1. Interacts (via ULD domain) with ASXL1 (via DEUBAD domain); the interaction is direct and forms a ubiquitin binding cleft. The interaction with ASXL1 stabilizes BAP1 but is not required for nucleosome binding. Associates (via C-terminus) with nucleosome and chromatosome complexes through direct interaction with DNA and the histone3/4 dimer; this association displaces the histone-2A C-terminal tail, extending and orienting the H2AK118ub1 substrate towards the BAP1 deubiquitinase active site. Also interacts (via arginine finger) directly with the histone H2A-H2B acidic patch; this interaction is not critical for nucleosome-chromatosome association but may play a role in orienting the H2AK118ub1 substrate towards the PR-DUB complex active site. Interacts with BRCA1 (via the RING finger). Interacts (via HBM-like motif) with HCFC1. Interacts (via a C-terminal region overlapping the ULD domain) with YY1; the interaction is direct and requires the interaction with HCFC1. Interacts (when phosphorylated at Thr-493) with FOXK1. Interacts (when phosphorylated at Thr-493) with FOXK2; leading to recruitment of the PR-DUB complex and repression of FOXK2 target genes. Interacts (via non-classical PY-NLS) with TNPO1/transportin-1 (via HEAT repeats 8-12); the interaction is direct, mediates BAP1 nuclear localization and disrupts BAP1 homodimerization. Interacts (via C-terminus) with KPNA1/importin alpha5 and KPNA2/importin alpha1; these interactions can contribute to BAP1 nuclear localization but are less important than the interaction with TNPO1/transportin-1. The interaction with TNPO1/transportin-1 disrupts homodimerization and blocks ubiquitination by UBE2O. Ubiquitinated: monoubiquitinated at multiple sites within its nuclear localization signal (NLS) BY UBE2O, leading to cytoplasmic retention. Able to mediate autodeubiquitination via intramolecular interactions to counteract cytoplasmic retention. Monoubiquitinated on at least 4 sites near or within its PY-NLS. In terms of tissue distribution, highly expressed in testis, placenta and ovary. Expressed in breast. levels in the placenta increase over the course of pregnancy.

It localises to the cytoplasm. Its subcellular location is the nucleus. It is found in the chromosome. The enzyme catalyses Thiol-dependent hydrolysis of ester, thioester, amide, peptide and isopeptide bonds formed by the C-terminal Gly of ubiquitin (a 76-residue protein attached to proteins as an intracellular targeting signal).. Deubiquitinating enzyme that plays a key role in chromatin by mediating deubiquitination of histone H2A and HCFC1. Catalytic component of the polycomb repressive deubiquitinase (PR-DUB) complex, a complex that specifically mediates deubiquitination of histone H2A monoubiquitinated at 'Lys-120' (H2AK119ub1). Does not deubiquitinate monoubiquitinated histone H2B. The PR-DUB complex is an epigenetic regulator of gene expression and acts as a transcriptional coactivator, affecting genes involved in development, cell communication, signaling, cell proliferation and cell viability. Antagonizes PRC1 mediated H2AK119ub1 monoubiquitination. As part of the PR-DUB complex, associates with chromatin enriched in histone marks H3K4me1, H3K4me3, and H3K27Ac, but not in H3K27me3. Recruited to specific gene-regulatory regions by YY1. Acts as a regulator of cell growth by mediating deubiquitination of HCFC1 N-terminal and C-terminal chains, with some specificity toward 'Lys-48'-linked polyubiquitin chains compared to 'Lys-63'-linked polyubiquitin chains. Deubiquitination of HCFC1 does not lead to increase stability of HCFC1. Interferes with the BRCA1 and BARD1 heterodimer activity by inhibiting their ability to mediate ubiquitination and autoubiquitination. It however does not mediate deubiquitination of BRCA1 and BARD1. Able to mediate autodeubiquitination via intramolecular interactions to counteract monoubiquitination at the nuclear localization signal (NLS), thereby protecting it from cytoplasmic sequestration. Negatively regulates epithelial-mesenchymal transition (EMT) of trophoblast stem cells during placental development by regulating genes involved in epithelial cell integrity, cell adhesion and cytoskeletal organization. This is Ubiquitin carboxyl-terminal hydrolase BAP1 from Homo sapiens (Human).